A 288-amino-acid polypeptide reads, in one-letter code: Polyprenyl transferase eriF (288 aa).

6 helical membrane passes run 24 to 44 (ASII…TLPL), 51 to 71 (YIFL…LNQV), 101 to 121 (IAAF…LPET), 145 to 165 (CIAM…AISP), 215 to 235 (FIIT…GGIF), and 268 to 288 (FYTY…HGLI).

Belongs to the UbiA prenyltransferase family. The cofactor is Mg(2+).

Its subcellular location is the membrane. Its function is as follows. Polyprenyl transferase; part of the gene cluster that mediates the biosynthesis of erinacines, cyathane-xylosides that show unique biological activities, including leishmanicidal activity, stimulating activity for nerve growth-factor synthesis, and agonistic activity toward the kappa opioid receptor. The role of eriF within the pathway has still to be determined. The first step of the erinacines biosynthesis pathway is catalyzed by the geranylgeranyl diphosphate (GGPP) synthase eriE via conversion of farnesyl pyrophosphate and isopentyl pyrophosphate into geranylgeranyl pyrophosphate (GGPP). GGPP is then substrate of the diterpene cyclase eriG for the production of cyatha-3,12-diene. The cytochrome P450 monooxygenase eriI then hydroxylates cyatha-3,12-diene at C-14 of the seven-membered ring to produce erinacol, which is further hydroxylated at C-15 by the cytochrome P450 monooxygenase eriC to yield cyathadiol. The cytochrome P450 monooxygenase eriA then catalyzes C-11 hydroxylation in the presence of the short chain dehydrogenase/reductase (SDR) eriH, which leads to the production of cyathatriol. The acetyltransferase eriL converts cyathatriol into 11-O-acetyl-cyathatriol. The SDR eriH catalyzes further oxidation of 11-O-acetyl-cyathatriol into 1-O-acetylcyathin A3. Finally, the glycosyl transferase eriJ tranfers xylose from UDP-xylose onto C-14 of 11-O-acetyl-cyathatriol to form eracine Q. EriJ is also able to convert 11-O-acetyl-cyathatriol to eracine Q2 by using UDP-D-glucose as cosubstrate, but at a lower rate. In Hericium erinaceus (Lion's mane mushroom), this protein is Polyprenyl transferase eriF.